Reading from the N-terminus, the 174-residue chain is Gamma-crystallin D (174 aa).

2 consecutive Beta/gamma crystallin 'Greek key' domains span residues 2-40 (GKIT…RVDS) and 41-83 (GCWM…RIIP). Positions 84 to 87 (YSGS) are connecting peptide. Beta/gamma crystallin 'Greek key' domains are found at residues 88–128 (HKMR…NVLD) and 129–171 (GCWI…RRVI).

Belongs to the beta/gamma-crystallin family. Monomer.

In terms of biological role, crystallins are the dominant structural components of the vertebrate eye lens. The protein is Gamma-crystallin D (CRYGD) of Macropus fuliginosus (Western gray kangaroo).